The sequence spans 121 residues: Small ribosomal subunit protein uS13 (121 aa).

The tract at residues 91–121 (HRKGLPMRGQRTRTNARTRKGPRKAGVALKK) is disordered.

Belongs to the universal ribosomal protein uS13 family. In terms of assembly, part of the 30S ribosomal subunit. Forms a loose heterodimer with protein S19. Forms two bridges to the 50S subunit in the 70S ribosome.

Functionally, located at the top of the head of the 30S subunit, it contacts several helices of the 16S rRNA. In the 70S ribosome it contacts the 23S rRNA (bridge B1a) and protein L5 of the 50S subunit (bridge B1b), connecting the 2 subunits; these bridges are implicated in subunit movement. Contacts the tRNAs in the A and P-sites. In Cupriavidus taiwanensis (strain DSM 17343 / BCRC 17206 / CCUG 44338 / CIP 107171 / LMG 19424 / R1) (Ralstonia taiwanensis (strain LMG 19424)), this protein is Small ribosomal subunit protein uS13.